The following is a 78-amino-acid chain: Small integral membrane protein 5 (78 aa).

A helical transmembrane segment spans residues 32-52 (ILAFSVLVVFTATVVLLLLIA).

It localises to the membrane. This chain is Small integral membrane protein 5 (SMIM5), found in Bos taurus (Bovine).